Here is a 151-residue protein sequence, read N- to C-terminus: Deoxyuridine 5'-triphosphate nucleotidohydrolase (151 aa).

Substrate contacts are provided by residues R70–G72, N83, L87–D89, and M97.

Belongs to the dUTPase family. The cofactor is Mg(2+).

It catalyses the reaction dUTP + H2O = dUMP + diphosphate + H(+). The protein operates within pyrimidine metabolism; dUMP biosynthesis; dUMP from dCTP (dUTP route): step 2/2. In terms of biological role, this enzyme is involved in nucleotide metabolism: it produces dUMP, the immediate precursor of thymidine nucleotides and it decreases the intracellular concentration of dUTP so that uracil cannot be incorporated into DNA. This chain is Deoxyuridine 5'-triphosphate nucleotidohydrolase, found in Pseudomonas fluorescens (strain Pf0-1).